The chain runs to 286 residues: 4-hydroxy-tetrahydrodipicolinate synthase (286 aa).

Thr-42 contributes to the pyruvate binding site. The active-site Proton donor/acceptor is the Tyr-129. The active-site Schiff-base intermediate with substrate is the Lys-157. Val-196 is a binding site for pyruvate.

The protein belongs to the DapA family. In terms of assembly, homotetramer; dimer of dimers.

The protein localises to the cytoplasm. The enzyme catalyses L-aspartate 4-semialdehyde + pyruvate = (2S,4S)-4-hydroxy-2,3,4,5-tetrahydrodipicolinate + H2O + H(+). The protein operates within amino-acid biosynthesis; L-lysine biosynthesis via DAP pathway; (S)-tetrahydrodipicolinate from L-aspartate: step 3/4. Catalyzes the condensation of (S)-aspartate-beta-semialdehyde [(S)-ASA] and pyruvate to 4-hydroxy-tetrahydrodipicolinate (HTPA). The sequence is that of 4-hydroxy-tetrahydrodipicolinate synthase from Chlamydia muridarum (strain MoPn / Nigg).